We begin with the raw amino-acid sequence, 751 residues long: Diamine oxidase [copper-containing] (751 aa).

The first 19 residues, 1-19 (MPALGWAVAAILMLQTAMA), serve as a signal peptide directing secretion. N-linked (GlcNAc...) asparagine glycans are attached at residues N110 and N168. A disulfide bridge links C177 with C181. Residue D373 is the Proton acceptor of the active site. An intrachain disulfide couples C391 to C417. Catalysis depends on Y461, which acts as the Schiff-base intermediate with substrate; via topaquinone. Y461 bears the 2',4',5'-topaquinone mark. 2 residues coordinate Cu(2+): H510 and H512. D519, L520, and D521 together coordinate Ca(2+). An N-linked (GlcNAc...) asparagine glycan is attached at N538. Ca(2+) is bound by residues E562, F653, N656, E658, D664, and L665. H675 serves as a coordination point for Cu(2+). An N-linked (GlcNAc...) asparagine glycan is attached at N745.

This sequence belongs to the copper/topaquinone oxidase family. Homodimer; disulfide-linked. Requires Cu(2+) as cofactor. It depends on Ca(2+) as a cofactor. The cofactor is L-topaquinone. In terms of processing, N-glycosylated. Topaquinone (TPQ) is generated by copper-dependent autoxidation of a specific tyrosyl residue. In terms of tissue distribution, widely expressed with higher expression in placenta and kidney.

It is found in the secreted. It localises to the extracellular space. The protein localises to the cell membrane. It catalyses the reaction histamine + O2 + H2O = imidazole-4-acetaldehyde + H2O2 + NH4(+). The enzyme catalyses N(tau)-methylhistamine + O2 + H2O = 1-methylimidazole-4-acetaldehyde + H2O2 + NH4(+). The catalysed reaction is putrescine + O2 + H2O = 4-aminobutanal + H2O2 + NH4(+). It carries out the reaction cadaverine + O2 + H2O = 5-aminopentanal + H2O2 + NH4(+). Inhibited by amiloride and amiloride analogs. Inhibited by isoniazid, cimetidine, clonidine, berenil and pentamidine. Catalyzes the oxidative deamination of primary amines to the corresponding aldehydes with the concomitant production of hydrogen peroxide and ammonia. Its preferred substrates are the diamines histamine and 1-methylhistamine and it could therefore play a role in allergic and immune responses. Has a broad specificity for diamines and can also act on cadaverine and putrescine, two products of amino acid catabolism. It could also act on polyamines, like spermidine and spermine though less efficiently, and regulate various biological processes. This is Diamine oxidase [copper-containing] from Homo sapiens (Human).